The sequence spans 331 residues: Vitamin B12 import system permease protein BtuC (331 aa).

Transmembrane regions (helical) follow at residues 20-42 (LLIG…WLSP), 62-84 (LLAA…VLLG), 91-113 (GVVG…FPSL), 117-136 (VAFM…LLVV), 148-170 (LLLV…FYFS), 190-209 (SWYQ…WLVL), 240-262 (LAIA…VGLV), 277-299 (LLLP…IARL), and 306-325 (LPLG…WMLV).

This sequence belongs to the binding-protein-dependent transport system permease family. FecCD subfamily. In terms of assembly, the complex is composed of two ATP-binding proteins (BtuD), two transmembrane proteins (BtuC) and a solute-binding protein (BtuF).

The protein resides in the cell inner membrane. In terms of biological role, part of the ABC transporter complex BtuCDF involved in vitamin B12 import. Involved in the translocation of the substrate across the membrane. The polypeptide is Vitamin B12 import system permease protein BtuC (Vibrio cholerae serotype O1 (strain ATCC 39315 / El Tor Inaba N16961)).